We begin with the raw amino-acid sequence, 100 residues long: Apolipoprotein C-II (100 aa).

The signal sequence occupies residues 1 to 25 (MDARSLLLLWLLLPLLLLLGCEVQG). The lipid binding stretch occupies residues 65 to 73 (AVDETIRDI). A lipoprotein lipase cofactor region spans residues 77–100 (GSAAISTYTGILTDQILTMLQGKQ).

The protein belongs to the apolipoprotein C2 family. Post-translationally, proapolipoprotein C-II is synthesized as a sialic acid containing glycoprotein which is subsequently desialylated prior to its proteolytic processing. In terms of processing, proapolipoprotein C-II, the major form found in plasma undergoes proteolytic cleavage of its N-terminal hexapeptide to generate apolipoprotein C-II, which occurs as the minor form in plasma. In terms of tissue distribution, liver.

It is found in the secreted. In terms of biological role, component of chylomicrons, very low-density lipoproteins (VLDL), low-density lipoproteins (LDL), and high-density lipoproteins (HDL) in plasma. Plays an important role in lipoprotein metabolism as an activator of lipoprotein lipase. Both proapolipoprotein C-II and apolipoprotein C-II can activate lipoprotein lipase. The protein is Apolipoprotein C-II (APOC2) of Cavia porcellus (Guinea pig).